A 155-amino-acid chain; its full sequence is S-ribosylhomocysteine lyase (155 aa).

His58, His62, and Cys125 together coordinate Fe cation.

It belongs to the LuxS family. In terms of assembly, homodimer. Fe cation is required as a cofactor.

The enzyme catalyses S-(5-deoxy-D-ribos-5-yl)-L-homocysteine = (S)-4,5-dihydroxypentane-2,3-dione + L-homocysteine. Involved in the synthesis of autoinducer 2 (AI-2) which is secreted by bacteria and is used to communicate both the cell density and the metabolic potential of the environment. The regulation of gene expression in response to changes in cell density is called quorum sensing. Catalyzes the transformation of S-ribosylhomocysteine (RHC) to homocysteine (HC) and 4,5-dihydroxy-2,3-pentadione (DPD). This chain is S-ribosylhomocysteine lyase, found in Helicobacter pylori (strain Shi470).